Reading from the N-terminus, the 311-residue chain is Pyrimidine-specific ribonucleoside hydrolase RihA (311 aa).

The active site involves histidine 240.

It belongs to the IUNH family. RihA subfamily.

In terms of biological role, hydrolyzes cytidine or uridine to ribose and cytosine or uracil, respectively. The protein is Pyrimidine-specific ribonucleoside hydrolase RihA of Salmonella schwarzengrund (strain CVM19633).